Reading from the N-terminus, the 782-residue chain is Semaphorin-3G (782 aa).

Residues 1–22 (MAPSAWAICWLLGGLLLHGGSS) form the signal peptide. Residues 32–519 (RLRLSYRDLL…SRLGVAQLRL (488 aa)) enclose the Sema domain. Asn-44 carries N-linked (GlcNAc...) asparagine glycosylation. Cys-105 and Cys-116 are oxidised to a cystine. A glycan (N-linked (GlcNAc...) asparagine) is linked at Asn-127. 5 cysteine pairs are disulfide-bonded: Cys-134–Cys-143, Cys-270–Cys-382, Cys-294–Cys-342, Cys-522–Cys-540, and Cys-603–Cys-655. The Ig-like C2-type domain occupies 569–671 (PALQCLGQSQ…FSQTVVRLAL (103 aa)).

It belongs to the semaphorin family.

It localises to the secreted. Has chemorepulsive activities for sympathetic axons. Ligand of NRP2. This Homo sapiens (Human) protein is Semaphorin-3G (SEMA3G).